We begin with the raw amino-acid sequence, 628 residues long: Junctophilin-4 (628 aa).

Residues 1-606 (MSPGGKFDFD…RPAQPGAANP (606 aa)) lie on the Cytoplasmic side of the membrane. MORN repeat units lie at residues 50 to 72 (LGVF…KREG), 74 to 95 (GVER…KGRS), 96 to 117 (GVWE…FQDG), 118 to 140 (YGTE…KRHG), 141 to 163 (YGVR…RTSL), and 164 to 186 (DSGH…EGGS). 2 disordered regions span residues 158–214 (PRRT…RTPA) and 231–276 (GGRR…LIEG). Pro residues predominate over residues 170–179 (PPTPPPPLPL). Composition is skewed to low complexity over residues 231-241 (GGRRSSLGSKR) and 253-272 (GSTG…APPA). MORN repeat units follow at residues 317 to 339 (YGRT…RLVH) and 340 to 362 (GGRV…KVDR). The segment at 415-602 (DLQPMLEAPG…AATERPAQPG (188 aa)) is disordered. The segment covering 432–443 (EGSDTEPLDEDS) has biased composition (acidic residues). Low complexity-rich tracts occupy residues 453–467 (PSEG…PASS) and 528–541 (GSPL…SSGS). The chain crosses the membrane as a helical; Anchor for type IV membrane protein span at residues 607–628 (LVVGAVALLDLSLAFLFSQLLT).

Belongs to the junctophilin family.

The protein localises to the cell membrane. Its subcellular location is the endoplasmic reticulum membrane. Functionally, junctophilins contribute to the formation of junctional membrane complexes (JMCs) which link the plasma membrane with the endoplasmic or sarcoplasmic reticulum in excitable cells. Provides a structural foundation for functional cross-talk between the cell surface and intracellular calcium release channels. JPH4 is brain-specific and appears to have an active role in certain neurons involved in motor coordination and memory. This Homo sapiens (Human) protein is Junctophilin-4 (JPH4).